The sequence spans 1250 residues: DNA excision repair protein ERCC-6-like (1250 aa).

A Phosphoserine modification is found at Ser14. The TPR 1 repeat unit spans residues 21-54 (YLRYVKEAKEATKNGDLEEAFKLFNLAKDIFPNE). Positions 109–277 (SLYRDGRKGG…WSLFDFACQG (169 aa)) constitute a Helicase ATP-binding domain. 122-129 (DDMGLGKT) contributes to the ATP binding site. Positions 228-231 (DEAH) match the DEAH box motif. A Helicase C-terminal domain is found at 464–620 (FLMDLLKRLR…EKKNPFRYFS (157 aa)). Residues 735 to 768 (VFPSSTKKKCPKLNKPQPQPSPLLSTHHTQEEDI) are disordered. Phosphoserine occurs at positions 755, 774, 807, and 810. Phosphothreonine is present on Thr813. Ser820 carries the post-translational modification Phosphoserine. A disordered region spans residues 926–946 (SALQDAQASEAKLEEEPSASS). Residues Ser969, Ser971, Ser995, Ser1004, and Ser1028 each carry the phosphoserine modification. A disordered region spans residues 1061-1092 (ASTPKNDISPPGRFFSSQIPSSVNKSMNSRRS). Thr1063 carries the phosphothreonine; by PLK1 modification. Residue Ser1069 is modified to Phosphoserine. Positions 1075–1087 (FSSQIPSSVNKSM) are enriched in polar residues. Phosphoserine is present on residues Ser1098 and Ser1118. Residues 1110–1199 (MEERLDDSSE…QDKAAEATND (90 aa)) form a disordered region. Over residues 1115–1124 (DDSSEAKGPE) the composition is skewed to basic and acidic residues. The segment covering 1125–1135 (DYPEEGVEESS) has biased composition (acidic residues). Residues 1149–1173 (ETLSSENKSSWLMTSKPSALAQETS) are compositionally biased toward polar residues. Ser1181 and Ser1188 each carry phosphoserine. Residues 1200–1233 (YETLVKRGKELKECGKIQEALNCLVKALDIKSAD) form a TPR 2 repeat.

The protein belongs to the SNF2/RAD54 helicase family. As to quaternary structure, interacts with PLK1, which phosphorylates it. Both proteins are mutually dependent on each other for correct subcellular localization. Interacts (via N-terminal TPR repeat) with BEND3 (via BEN domains 1 and 3); the interaction is direct. Phosphorylation by PLK1 prevents the association with chromosome arms and restricts its localization to the kinetochore-centromere region.

The protein resides in the chromosome. Its subcellular location is the centromere. It localises to the kinetochore. The enzyme catalyses ATP + H2O = ADP + phosphate + H(+). Its function is as follows. DNA helicase that acts as a tension sensor that associates with catenated DNA which is stretched under tension until it is resolved during anaphase. Functions as ATP-dependent DNA translocase. Can promote Holliday junction branch migration (in vitro). This is DNA excision repair protein ERCC-6-like (ERCC6L) from Homo sapiens (Human).